An 89-amino-acid chain; its full sequence is Small ribosomal subunit protein uS15 (89 aa).

The protein belongs to the universal ribosomal protein uS15 family. Part of the 30S ribosomal subunit. Forms a bridge to the 50S subunit in the 70S ribosome, contacting the 23S rRNA.

Its function is as follows. One of the primary rRNA binding proteins, it binds directly to 16S rRNA where it helps nucleate assembly of the platform of the 30S subunit by binding and bridging several RNA helices of the 16S rRNA. Forms an intersubunit bridge (bridge B4) with the 23S rRNA of the 50S subunit in the ribosome. This Parabacteroides distasonis (strain ATCC 8503 / DSM 20701 / CIP 104284 / JCM 5825 / NCTC 11152) protein is Small ribosomal subunit protein uS15.